The primary structure comprises 392 residues: Esterase EstB (392 aa).

Catalysis depends on Ser75, which acts as the Acyl-ester intermediate.

It belongs to the class-A beta-lactamase family.

The protein localises to the cytoplasm. Its activity is regulated as follows. Strongly inhibited by eserin, NaF, HgCl2, SDS and Triton X-100. Acts on short-chain (C4-C6) fatty acid esters and triglycerides, including tertiary alcohol esters. Activity on p-nitrophenyl esters is generally higher than on o-nitrophenyl esters. Lacks beta-lactamase activity; it hydrolyzes the ester bond of cephalosporin substrates but there is no opening of the beta-lactam ring observed. This is Esterase EstB (estB) from Burkholderia gladioli (Pseudomonas marginata).